The sequence spans 277 residues: Probable endonuclease 4 (277 aa).

Positions 69, 109, 145, 179, 182, 214, 227, 229, and 259 each coordinate Zn(2+).

The protein belongs to the AP endonuclease 2 family. It depends on Zn(2+) as a cofactor.

It carries out the reaction Endonucleolytic cleavage to 5'-phosphooligonucleotide end-products.. Endonuclease IV plays a role in DNA repair. It cleaves phosphodiester bonds at apurinic or apyrimidinic (AP) sites, generating a 3'-hydroxyl group and a 5'-terminal sugar phosphate. This is Probable endonuclease 4 from Bacteroides thetaiotaomicron (strain ATCC 29148 / DSM 2079 / JCM 5827 / CCUG 10774 / NCTC 10582 / VPI-5482 / E50).